A 139-amino-acid chain; its full sequence is Large ribosomal subunit protein uL16 (139 aa).

Residues 1–16 (MLIPKRTKYRKQHRPV) are compositionally biased toward basic residues. The interval 1 to 22 (MLIPKRTKYRKQHRPVRSGMSK) is disordered.

It belongs to the universal ribosomal protein uL16 family. In terms of assembly, part of the 50S ribosomal subunit.

In terms of biological role, binds 23S rRNA and is also seen to make contacts with the A and possibly P site tRNAs. The polypeptide is Large ribosomal subunit protein uL16 (Bifidobacterium longum subsp. infantis (strain ATCC 15697 / DSM 20088 / JCM 1222 / NCTC 11817 / S12)).